Reading from the N-terminus, the 326-residue chain is Ribose-phosphate pyrophosphokinase 4 (326 aa).

Aspartate 140, histidine 142, histidine 151, and aspartate 155 together coordinate Mg(2+).

The protein belongs to the ribose-phosphate pyrophosphokinase family.

The protein localises to the cytoplasm. The enzyme catalyses D-ribose 5-phosphate + ATP = 5-phospho-alpha-D-ribose 1-diphosphate + AMP + H(+). The protein operates within metabolic intermediate biosynthesis; 5-phospho-alpha-D-ribose 1-diphosphate biosynthesis; 5-phospho-alpha-D-ribose 1-diphosphate from D-ribose 5-phosphate (route I): step 1/1. 5-phosphoribose 1-diphosphate synthase involved in nucleotide, histidine, and tryptophan biosynthesis. Active in heteromultimeric complexes with other 5-phosphoribose 1-diphosphate synthases (PRS2, PRS3, PRS4 and PRS5). This is Ribose-phosphate pyrophosphokinase 4 (PRS4) from Saccharomyces cerevisiae (strain ATCC 204508 / S288c) (Baker's yeast).